The chain runs to 289 residues: Polyamine aminopropyltransferase (289 aa).

The region spanning 5-245 (PGPIVLVEPL…YAVNYILGSL (241 aa)) is the PABS domain. Gln-36 lines the S-methyl-5'-thioadenosine pocket. Residues His-67 and Glu-91 each coordinate spermidine. Residues Asp-111 and 143–144 (DG) contribute to the S-methyl-5'-thioadenosine site. The Proton acceptor role is filled by Asp-164.

The protein belongs to the spermidine/spermine synthase family. In terms of assembly, homodimer or homotetramer.

It localises to the cytoplasm. The enzyme catalyses S-adenosyl 3-(methylsulfanyl)propylamine + putrescine = S-methyl-5'-thioadenosine + spermidine + H(+). Its pathway is amine and polyamine biosynthesis; spermidine biosynthesis; spermidine from putrescine: step 1/1. In terms of biological role, catalyzes the irreversible transfer of a propylamine group from the amino donor S-adenosylmethioninamine (decarboxy-AdoMet) to putrescine (1,4-diaminobutane) to yield spermidine. In Pyrobaculum arsenaticum (strain DSM 13514 / JCM 11321 / PZ6), this protein is Polyamine aminopropyltransferase.